The primary structure comprises 420 residues: Tyrosine--tRNA ligase 2 (420 aa).

Tyrosine 36 lines the L-tyrosine pocket. The 'HIGH' region motif lies at proline 41 to histidine 50. Residues tyrosine 171 and glutamine 175 each coordinate L-tyrosine. A 'KMSKS' region motif is present at residues lysine 231–threonine 235. Lysine 234 contributes to the ATP binding site. The S4 RNA-binding domain occupies leucine 354–tyrosine 420.

It belongs to the class-I aminoacyl-tRNA synthetase family. TyrS type 1 subfamily. As to quaternary structure, homodimer.

It is found in the cytoplasm. It catalyses the reaction tRNA(Tyr) + L-tyrosine + ATP = L-tyrosyl-tRNA(Tyr) + AMP + diphosphate + H(+). Catalyzes the attachment of tyrosine to tRNA(Tyr) in a two-step reaction: tyrosine is first activated by ATP to form Tyr-AMP and then transferred to the acceptor end of tRNA(Tyr). The sequence is that of Tyrosine--tRNA ligase 2 from Enterococcus faecalis (strain ATCC 700802 / V583).